We begin with the raw amino-acid sequence, 223 residues long: Cytidylate kinase (223 aa).

12 to 20 provides a ligand contact to ATP; it reads GPAGSGKST.

It belongs to the cytidylate kinase family. Type 1 subfamily.

The protein resides in the cytoplasm. The catalysed reaction is CMP + ATP = CDP + ADP. The enzyme catalyses dCMP + ATP = dCDP + ADP. This is Cytidylate kinase from Onion yellows phytoplasma (strain OY-M).